Consider the following 127-residue polypeptide: Fluoride-specific ion channel FluC (127 aa).

Helical transmembrane passes span 37-57 (TSFVNIAGSLAMGLLAGWLAL), 68-88 (LFLATGVLGGFTTFSAFSLEV), and 102-122 (LYAGVSVLLGVSALFIGLWMA). Positions 76 and 79 each coordinate Na(+).

This sequence belongs to the fluoride channel Fluc/FEX (TC 1.A.43) family.

Its subcellular location is the cell inner membrane. It catalyses the reaction fluoride(in) = fluoride(out). Na(+) is not transported, but it plays an essential structural role and its presence is essential for fluoride channel function. Its function is as follows. Fluoride-specific ion channel. Important for reducing fluoride concentration in the cell, thus reducing its toxicity. The sequence is that of Fluoride-specific ion channel FluC from Hyphomonas neptunium (strain ATCC 15444).